A 162-amino-acid chain; its full sequence is General odorant-binding protein 2 (162 aa).

The first 18 residues, 1-18 (MTSKSCLLLVAMVTLTTS), serve as a signal peptide directing secretion. 3 disulfide bridges follow: Cys-40/Cys-75, Cys-71/Cys-129, and Cys-118/Cys-138.

Belongs to the PBP/GOBP family. In terms of tissue distribution, antenna.

Present in the aqueous fluid surrounding olfactory sensory dendrites and are thought to aid in the capture and transport of hydrophobic odorants into and through this fluid. This is General odorant-binding protein 2 from Heliothis virescens (Tobacco budworm moth).